A 244-amino-acid polypeptide reads, in one-letter code: 5-oxoprolinase subunit A (244 aa).

It belongs to the LamB/PxpA family. Forms a complex composed of PxpA, PxpB and PxpC.

It carries out the reaction 5-oxo-L-proline + ATP + 2 H2O = L-glutamate + ADP + phosphate + H(+). Its function is as follows. Catalyzes the cleavage of 5-oxoproline to form L-glutamate coupled to the hydrolysis of ATP to ADP and inorganic phosphate. The protein is 5-oxoprolinase subunit A of Salmonella schwarzengrund (strain CVM19633).